The following is a 202-amino-acid chain: Ras-related protein Rab-2B (202 aa).

31–38 is a GTP binding site; the sequence is GDSAVGKS. The Effector region signature appears at 53 to 61; the sequence is SDFTIGVEF. Residues 79-83 and 137-140 contribute to the GTP site; these read DTAGQ and NKAD.

This sequence belongs to the small GTPase superfamily. Rab family. In terms of processing, this sequence lacks the C-terminal cysteine motifs subject to isoprenylation in other Rab proteins.

This Dictyostelium discoideum (Social amoeba) protein is Ras-related protein Rab-2B (rab2B).